The following is a 335-amino-acid chain: Fructose-1,6-bisphosphatase class 1 (335 aa).

4 residues coordinate Mg(2+): Glu-92, Asp-114, Leu-116, and Asp-117. Residues 117 to 120 (DGSS) and Asn-209 contribute to the substrate site. Glu-281 contacts Mg(2+).

It belongs to the FBPase class 1 family. Homotetramer. Mg(2+) serves as cofactor.

Its subcellular location is the cytoplasm. The enzyme catalyses beta-D-fructose 1,6-bisphosphate + H2O = beta-D-fructose 6-phosphate + phosphate. Its pathway is carbohydrate biosynthesis; gluconeogenesis. The sequence is that of Fructose-1,6-bisphosphatase class 1 from Nitrosococcus oceani (strain ATCC 19707 / BCRC 17464 / JCM 30415 / NCIMB 11848 / C-107).